Reading from the N-terminus, the 79-residue chain is Acyl carrier protein (79 aa).

One can recognise a Carrier domain in the interval 2–77 (ENIEQRVKKI…QAIDYVTAHL (76 aa)). At S37 the chain carries O-(pantetheine 4'-phosphoryl)serine.

The protein belongs to the acyl carrier protein (ACP) family. 4'-phosphopantetheine is transferred from CoA to a specific serine of apo-ACP by AcpS. This modification is essential for activity because fatty acids are bound in thioester linkage to the sulfhydryl of the prosthetic group.

It localises to the cytoplasm. It functions in the pathway lipid metabolism; fatty acid biosynthesis. Its function is as follows. Carrier of the growing fatty acid chain in fatty acid biosynthesis. This Laribacter hongkongensis (strain HLHK9) protein is Acyl carrier protein.